We begin with the raw amino-acid sequence, 169 residues long: MQNTIRIVGIDPGLRRTGWGIIETSGNSLRFVASGTVTSDGDMDLASRLCQLHDGLAEIVHSYKPDEAAVEQTFVNKDAVATLKLGQARGIAMLVPARAGLPVSEYAPNAVKKAVIGVGHGEKQQIHMMLKILMPKVEFKGNDAADALAIAICHAHNRGSNRMRQALAG.

Active-site residues include Asp-11, Glu-71, and Asp-143. Mg(2+) is bound by residues Asp-11, Glu-71, and Asp-143.

It belongs to the RuvC family. In terms of assembly, homodimer which binds Holliday junction (HJ) DNA. The HJ becomes 2-fold symmetrical on binding to RuvC with unstacked arms; it has a different conformation from HJ DNA in complex with RuvA. In the full resolvosome a probable DNA-RuvA(4)-RuvB(12)-RuvC(2) complex forms which resolves the HJ. Requires Mg(2+) as cofactor.

The protein resides in the cytoplasm. It carries out the reaction Endonucleolytic cleavage at a junction such as a reciprocal single-stranded crossover between two homologous DNA duplexes (Holliday junction).. Its function is as follows. The RuvA-RuvB-RuvC complex processes Holliday junction (HJ) DNA during genetic recombination and DNA repair. Endonuclease that resolves HJ intermediates. Cleaves cruciform DNA by making single-stranded nicks across the HJ at symmetrical positions within the homologous arms, yielding a 5'-phosphate and a 3'-hydroxyl group; requires a central core of homology in the junction. The consensus cleavage sequence is 5'-(A/T)TT(C/G)-3'. Cleavage occurs on the 3'-side of the TT dinucleotide at the point of strand exchange. HJ branch migration catalyzed by RuvA-RuvB allows RuvC to scan DNA until it finds its consensus sequence, where it cleaves and resolves the cruciform DNA. This Rhizobium johnstonii (strain DSM 114642 / LMG 32736 / 3841) (Rhizobium leguminosarum bv. viciae) protein is Crossover junction endodeoxyribonuclease RuvC.